Consider the following 433-residue polypeptide: MNNNIFSTTTTINDDYMLFPYNDHYSSQPLLPFSPSSSINDILIHSTSNTSNNHLDHHHQFQQPSPFSHFEFAPDCALLTSFHPENNGHDDNQTIPNDNHHPSLHFPLNNTIVEQPTEPSETINLIEDSQRISTSQDPKMKKAKKPSRTDRHSKIKTAKGTRDRRMRLSLDVAKELFGLQDMLGFDKASKTVEWLLTQAKPEIIKIATTLSHHGCFSSGDESHIRPVLGSMDTSSDLCELASMWTVDDRGSNTNTTETRGNKVDGRSMRGKRKRPEPRTPILKKLSKEERAKARERAKGRTMEKMMMKMKGRSQLVKVVEEDAHDHGEIIKNNNRSQVNRSSFEMTHCEDKIEELCKNDRFAVCNEFIMNKKDHISNESYDLVNYKPNSSFPVINHHRSQGAANSIEQHQFTDLHYSFGAKPRDLMHNYQNMY.

Disordered regions lie at residues 130 to 163 (QRISTSQDPKMKKAKKPSRTDRHSKIKTAKGTRD) and 247 to 281 (DDRGSNTNTTETRGNKVDGRSMRGKRKRPEPRTPI). The 59-residue stretch at 148–206 (RTDRHSKIKTAKGTRDRRMRLSLDVAKELFGLQDMLGFDKASKTVEWLLTQAKPEIIKI) folds into the TCP domain. Residues 287–304 (KEERAKARERAKGRTMEK) form the R domain.

As to expression, expressed in unelongated axillary buds, and, to a lower extent, in axillary structures such as flowers and siliques.

It is found in the nucleus. Its function is as follows. Transcription factor that prevents axillary bud outgrowth and delays early axillary bud development. Indirectly required for the auxin-induced control of apical dominance. This chain is Transcription factor TCP18, found in Arabidopsis thaliana (Mouse-ear cress).